The sequence spans 209 residues: Glutathione S-transferase 2 (209 aa).

The 81-residue stretch at 1–81 folds into the GST N-terminal domain; the sequence is MLDFYYLPGS…YLCDQYGDED (81 aa). Residues serine 10, 51–53, and 65–67 contribute to the glutathione site; these read RTI and ESR. Residues 88 to 209 enclose the GST C-terminal domain; it reads DTIQRAIVNQ…SGAKEFLTYK (122 aa).

It belongs to the GST superfamily. Theta family. As to quaternary structure, homodimer.

The enzyme catalyses RX + glutathione = an S-substituted glutathione + a halide anion + H(+). Conjugation of reduced glutathione to a wide number of exogenous and endogenous hydrophobic electrophiles. The sequence is that of Glutathione S-transferase 2 (GstD2) from Anopheles gambiae (African malaria mosquito).